Reading from the N-terminus, the 597-residue chain is Period protein homolog lin-42 (597 aa).

The disordered stretch occupies residues 1–44 (MEPAGHSSATHNIVVPNANPTQPQPLAPAMREEGATLSPPNTWS). The region spanning 155 to 223 (LQASHVSSNF…VRQAHIDLHN (69 aa)) is the PAS domain. Disordered stretches follow at residues 313–335 (PVPSTSRHSHHHHHSSLKDQNQG), 418–450 (KSQSRPESPAKQDEPFDEKKYPPQTPLTREALT), 473–509 (DDVPSSPPAKRTTPIHWTSSSQNHYRTMAPAPPPPPG), and 555–597 (DGLL…DSQN). Residues 425-438 (SPAKQDEPFDEKKY) are compositionally biased toward basic and acidic residues. A compositionally biased stretch (polar residues) spans 487 to 497 (IHWTSSSQNHY). The span at 561–577 (GATSTGGASPTSGTNSP) shows a compositional bias: low complexity.

It localises to the nucleus. The protein resides in the cytoplasm. Its function is as follows. Transcriptional repressor which interacts with the promoter region of target genes. Has a specific role in developmental timing where it regulates temporal expression of a number of miRNAs and mRNAs. Controls temporal cell fate transition during embryonic and early larval development by restricting the expression of specific miRNAs, including let-7, miR-48, lin-4, miR-35 and miR-58. Restricts the accumulation of lin-29 in the hypodermis to the larval L4 stage, thus controlling terminal differentiation of seam cells. Has a role in the miRNA-mediated specification of asymmetric gene expression patterns in gustatory neurons. May also regulate genes involved in other biological processes including transport, small molecule metabolism, and growth. Inhibits dauer formation, by antagonizing daf-12. Specifically required for maintaining the timing of larval development and molting cycle rhythms. This chain is Period protein homolog lin-42, found in Caenorhabditis elegans.